The chain runs to 117 residues: Protein Wnt-6 (117 aa).

S1 carries the O-palmitoleoyl serine; by PORCN lipid modification. Residues C83 and C98 are joined by a disulfide bond. An N-linked (GlcNAc...) asparagine glycan is attached at N84.

The protein belongs to the Wnt family. Post-translationally, palmitoleoylation is required for efficient binding to frizzled receptors. Depalmitoleoylation leads to Wnt signaling pathway inhibition.

It is found in the secreted. The protein localises to the extracellular space. The protein resides in the extracellular matrix. Ligand for members of the frizzled family of seven transmembrane receptors. Probable developmental protein. May be a signaling molecule which affects the development of discrete regions of tissues. Is likely to signal over only few cell diameters. In Evasterias troschelii (Mottled sea star), this protein is Protein Wnt-6 (WNT-6).